The chain runs to 103 residues: Large ribosomal subunit protein bL21 (103 aa).

The protein belongs to the bacterial ribosomal protein bL21 family. In terms of assembly, part of the 50S ribosomal subunit. Contacts protein L20.

This protein binds to 23S rRNA in the presence of protein L20. The sequence is that of Large ribosomal subunit protein bL21 from Aliivibrio salmonicida (strain LFI1238) (Vibrio salmonicida (strain LFI1238)).